A 99-amino-acid chain; its full sequence is Large ribosomal subunit protein uL23 (99 aa).

The protein belongs to the universal ribosomal protein uL23 family. Part of the 50S ribosomal subunit. Contacts protein L29, and trigger factor when it is bound to the ribosome.

One of the early assembly proteins it binds 23S rRNA. One of the proteins that surrounds the polypeptide exit tunnel on the outside of the ribosome. Forms the main docking site for trigger factor binding to the ribosome. This Psychromonas ingrahamii (strain DSM 17664 / CCUG 51855 / 37) protein is Large ribosomal subunit protein uL23.